A 559-amino-acid polypeptide reads, in one-letter code: Thermosome subunit alpha (559 aa).

Residues 535–547 are compositionally biased toward basic and acidic residues; that stretch reads SEKKGGEGSKEES. The disordered stretch occupies residues 535 to 559; sequence SEKKGGEGSKEESGGEGGSTPSLGD.

It belongs to the TCP-1 chaperonin family. As to quaternary structure, forms a Heterooligomeric complex of two stacked eight-membered rings.

In terms of biological role, molecular chaperone; binds unfolded polypeptides in vitro, and has a weak ATPase activity. The polypeptide is Thermosome subunit alpha (thsA) (Saccharolobus solfataricus (strain ATCC 35092 / DSM 1617 / JCM 11322 / P2) (Sulfolobus solfataricus)).